The primary structure comprises 130 residues: Small ribosomal subunit protein uS9 (130 aa).

Residues 101 to 110 (AGFLTRDPRM) are compositionally biased toward basic and acidic residues. The interval 101–130 (AGFLTRDPRMKERKKYGLKKARRAPQFSKR) is disordered. Basic residues predominate over residues 111–130 (KERKKYGLKKARRAPQFSKR).

The protein belongs to the universal ribosomal protein uS9 family.

The chain is Small ribosomal subunit protein uS9 from Clostridium tetani (strain Massachusetts / E88).